A 544-amino-acid polypeptide reads, in one-letter code: Probable protein kinase UbiB (544 aa).

The Protein kinase domain maps to 123–501; that stretch reads EFDIKPLASA…KRQQATGKFL (379 aa). ATP contacts are provided by residues 129–137 and K152; that span reads LASASIAQV. Residue D287 is the Proton acceptor of the active site. The next 2 membrane-spanning stretches (helical) occupy residues 496–516 and 519–539; these read ATGKFLFGVGATLVVCSAILV and AYEQLSMASGIAGVTFWLLSW.

The protein belongs to the ABC1 family. UbiB subfamily.

It is found in the cell inner membrane. It functions in the pathway cofactor biosynthesis; ubiquinone biosynthesis [regulation]. Its function is as follows. Is probably a protein kinase regulator of UbiI activity which is involved in aerobic coenzyme Q (ubiquinone) biosynthesis. The chain is Probable protein kinase UbiB from Vibrio parahaemolyticus serotype O3:K6 (strain RIMD 2210633).